Here is a 384-residue protein sequence, read N- to C-terminus: MSEQLVTPENVTTKDGKINLLDLNRQQMREFFKDLGEKTFRADQVMKWMYHYCCDNFDEMTDINKVLRGKLKEVAEIRAPEVVEEQRSSDGTIKWAIAVGDQRVETVYIPEDDRATLCVSSQVGCALECKFCSTAQQGFNRNLRVSEIIGQVWRAAKIVGAAKVTGQRPITNVVMMGMGEPLLNLNNVVPAMEIMLDDFGFGLSKRRVTLSTSGVVPALDKLGDMIDVALAISLHAPNDEIRDEIVPINKKYNIETFLAAVRRYLEKSNANQGRVTIEYVMLDHVNDGTEHAHQLAELLKDTPCKINLIPWNPFPDAPYGRSSNSRIDRFSKVLMSYGFTTIVRKTRGDDIDAACGQLAGDVIDRTKRTLRKRMQGEAIDIKAV.

E105 (proton acceptor) is an active-site residue. The 240-residue stretch at 111–350 folds into the Radical SAM core domain; sequence EDDRATLCVS…TIVRKTRGDD (240 aa). C118 and C355 form a disulfide bridge. C125, C129, and C132 together coordinate [4Fe-4S] cluster. Residues 179 to 180, S211, 233 to 235, and N312 contribute to the S-adenosyl-L-methionine site; these read GE and SLH. C355 (S-methylcysteine intermediate) is an active-site residue.

It belongs to the radical SAM superfamily. RlmN family. Requires [4Fe-4S] cluster as cofactor.

The protein resides in the cytoplasm. It carries out the reaction adenosine(2503) in 23S rRNA + 2 reduced [2Fe-2S]-[ferredoxin] + 2 S-adenosyl-L-methionine = 2-methyladenosine(2503) in 23S rRNA + 5'-deoxyadenosine + L-methionine + 2 oxidized [2Fe-2S]-[ferredoxin] + S-adenosyl-L-homocysteine. It catalyses the reaction adenosine(37) in tRNA + 2 reduced [2Fe-2S]-[ferredoxin] + 2 S-adenosyl-L-methionine = 2-methyladenosine(37) in tRNA + 5'-deoxyadenosine + L-methionine + 2 oxidized [2Fe-2S]-[ferredoxin] + S-adenosyl-L-homocysteine. Its function is as follows. Specifically methylates position 2 of adenine 2503 in 23S rRNA and position 2 of adenine 37 in tRNAs. m2A2503 modification seems to play a crucial role in the proofreading step occurring at the peptidyl transferase center and thus would serve to optimize ribosomal fidelity. In Shigella flexneri serotype 5b (strain 8401), this protein is Dual-specificity RNA methyltransferase RlmN.